The sequence spans 297 residues: Nucleotide-binding protein BTH_I0482 (297 aa).

ATP is bound at residue glycine 8–serine 15. Residue aspartate 57–serine 60 coordinates GTP.

The protein belongs to the RapZ-like family.

Its function is as follows. Displays ATPase and GTPase activities. This chain is Nucleotide-binding protein BTH_I0482, found in Burkholderia thailandensis (strain ATCC 700388 / DSM 13276 / CCUG 48851 / CIP 106301 / E264).